The following is a 178-amino-acid chain: Small ribosomal subunit protein uS4 (178 aa).

Residues 104–166 (RRLQTLVYRK…PNSPMALENH (63 aa)) enclose the S4 RNA-binding domain.

It belongs to the universal ribosomal protein uS4 family. In terms of assembly, part of the 30S ribosomal subunit. Contacts protein S5. The interaction surface between S4 and S5 is involved in control of translational fidelity.

One of the primary rRNA binding proteins, it binds directly to 16S rRNA where it nucleates assembly of the body of the 30S subunit. Functionally, with S5 and S12 plays an important role in translational accuracy. In Methanococcus vannielii (strain ATCC 35089 / DSM 1224 / JCM 13029 / OCM 148 / SB), this protein is Small ribosomal subunit protein uS4.